The chain runs to 605 residues: Isocitrate dehydrogenase kinase/phosphatase (605 aa).

ATP contacts are provided by residues 327–333 and lysine 348; that span reads APGIKGL. The active site involves aspartate 383.

It belongs to the AceK family.

The protein resides in the cytoplasm. It catalyses the reaction L-seryl-[isocitrate dehydrogenase] + ATP = O-phospho-L-seryl-[isocitrate dehydrogenase] + ADP + H(+). Bifunctional enzyme which can phosphorylate or dephosphorylate isocitrate dehydrogenase (IDH) on a specific serine residue. This is a regulatory mechanism which enables bacteria to bypass the Krebs cycle via the glyoxylate shunt in response to the source of carbon. When bacteria are grown on glucose, IDH is fully active and unphosphorylated, but when grown on acetate or ethanol, the activity of IDH declines drastically concomitant with its phosphorylation. The chain is Isocitrate dehydrogenase kinase/phosphatase from Burkholderia multivorans (strain ATCC 17616 / 249).